Consider the following 112-residue polypeptide: Protein lin-52 homolog (112 aa).

This sequence belongs to the lin-52 family. As to quaternary structure, component of the DREAM complex. In terms of tissue distribution, expressed in the brain, liver and retina. Highly expressed in the retinal ganglion cell and inner nuclear layers at the parr stage. Expressed at a lower level in inner segments of some retinal photoreceptors.

May be involved in retinal development. This Oncorhynchus mykiss (Rainbow trout) protein is Protein lin-52 homolog (lin52).